A 399-amino-acid polypeptide reads, in one-letter code: S-adenosylmethionine synthase (399 aa).

Residue H17 coordinates ATP. D19 contacts Mg(2+). E45 provides a ligand contact to K(+). The L-methionine site is built by E58 and Q101. The segment at Q101 to E111 is flexible loop. ATP contacts are provided by residues D177 to K179, R244 to F245, D253, R259 to K260, A276, and K280. D253 serves as a coordination point for L-methionine. K284 lines the L-methionine pocket.

This sequence belongs to the AdoMet synthase family. In terms of assembly, homotetramer; dimer of dimers. Mg(2+) serves as cofactor. Requires K(+) as cofactor.

It localises to the cytoplasm. It carries out the reaction L-methionine + ATP + H2O = S-adenosyl-L-methionine + phosphate + diphosphate. Its pathway is amino-acid biosynthesis; S-adenosyl-L-methionine biosynthesis; S-adenosyl-L-methionine from L-methionine: step 1/1. Catalyzes the formation of S-adenosylmethionine (AdoMet) from methionine and ATP. The overall synthetic reaction is composed of two sequential steps, AdoMet formation and the subsequent tripolyphosphate hydrolysis which occurs prior to release of AdoMet from the enzyme. The chain is S-adenosylmethionine synthase from Listeria innocua serovar 6a (strain ATCC BAA-680 / CLIP 11262).